A 320-amino-acid polypeptide reads, in one-letter code: 1-aminocyclopropane-1-carboxylate oxidase 3 (320 aa).

A Fe2OG dioxygenase domain is found at 153-253 (PNFGTKVSNY…RMSLASFYNP (101 aa)). The Fe cation site is built by His177, Asp179, and His234.

It belongs to the iron/ascorbate-dependent oxidoreductase family. Fe cation is required as a cofactor.

The enzyme catalyses 1-aminocyclopropane-1-carboxylate + L-ascorbate + O2 = ethene + L-dehydroascorbate + hydrogen cyanide + CO2 + 2 H2O. It participates in alkene biosynthesis; ethylene biosynthesis via S-adenosyl-L-methionine; ethylene from S-adenosyl-L-methionine: step 2/2. This chain is 1-aminocyclopropane-1-carboxylate oxidase 3 (ACO3), found in Petunia hybrida (Petunia).